Here is a 191-residue protein sequence, read N- to C-terminus: Small ribosomal subunit protein uS7 (191 aa).

The interval 56–80 is disordered; it reads NKSGEQGDGDGESGGKAGGIKKRSL.

This sequence belongs to the universal ribosomal protein uS7 family. In terms of assembly, part of the 30S ribosomal subunit. Contacts proteins S9 and S11.

Functionally, one of the primary rRNA binding proteins, it binds directly to 16S rRNA where it nucleates assembly of the head domain of the 30S subunit. Is located at the subunit interface close to the decoding center, probably blocks exit of the E-site tRNA. This Coxiella burnetii (strain RSA 493 / Nine Mile phase I) protein is Small ribosomal subunit protein uS7.